Here is an 852-residue protein sequence, read N- to C-terminus: MTLATRSLIKNLSSALGAQAEREQLIALISIATQTVAPLWPLDSAIAVNPLSGFEEQPFEEVLPEAAALFGARPTLSLNEWRTLMDEGRIDQVSLRKAVVNALGGPDEAFALLGPDLNAYNLLVARLLDMEAEDVPPVRRALSPGMATLARWLAAFFDRNAALRLPGRERGLYACLSEALRHDPALLRASNATGRAWLENAPADPVDMLILAARRDAVGPERRLPWLRAMVASLPGWAAHLRWRSEHAGPATSLGAPACMADLMALVALVQGVVQPAPRAVPDPDCPEDVEAALLVHCGVAQDAPAKWPEAGRARLRAVAALTHAQLGLIFQEAAESSFLGQLAPQLEGASARLAAPQSTLRPEAQAIFCIDVRSEPMRRALETQGRFETLGYAGFFGLPIAINPACAAPARNQLPVLLSPSHVVPERAMPGREAEATAMLARHAALGDAQAMLDTTKSGAIGFAAAEAAGPVAAVAMLARTLAPRLTHRLRQRLIGERGHVLAPAACNDQDHERHDGQGEGIPLAQRVAYARGMFALTGLSPQTARLVALVGHGGCTTNNAFAASLDCGACGGHPGGPNARLMAAILNDPAVRKGLAAKGVDLPHDTWFIAAQHDTTRDEVEIFDRHLVPASHVADLARFERALSCAGAQSRDERAARLDRTADDLLTGAAHWGEVRPEWGLSGNAAFIVGPRALTREVDLGGNAFLHSYDWKKDDDGSALTGIMTAPMIVAQWINCQYLFSTIDNEIFGAGDKTTQNVVGGFGVVQGSGGDLCTGLPRQSLFRDDGTPYHTPRRLAVIVHAPLQRVQDIVLRHDAVGRLVENGWVNLVVIDPWKHKAHHWVRGDWAVRPC.

Zn(2+)-binding residues include Cys-370, Asp-372, His-554, and Cys-569.

Belongs to the inorganic carbon transporter (TC 9.A.2) DabA family. As to quaternary structure, forms a complex with DabB. The cofactor is Zn(2+).

It localises to the cell inner membrane. Functionally, part of an energy-coupled inorganic carbon pump. The polypeptide is Probable inorganic carbon transporter subunit DabA (Novosphingobium aromaticivorans (strain ATCC 700278 / DSM 12444 / CCUG 56034 / CIP 105152 / NBRC 16084 / F199)).